The sequence spans 449 residues: Putative methylthiotransferase MJ0865 (449 aa).

A Radical SAM core domain is found at serine 163–serine 390. Residues cysteine 177, cysteine 181, and cysteine 184 each contribute to the [4Fe-4S] cluster site.

It belongs to the methylthiotransferase family. [4Fe-4S] cluster serves as cofactor.

This chain is Putative methylthiotransferase MJ0865, found in Methanocaldococcus jannaschii (strain ATCC 43067 / DSM 2661 / JAL-1 / JCM 10045 / NBRC 100440) (Methanococcus jannaschii).